We begin with the raw amino-acid sequence, 205 residues long: Hydrogenase-4 component A (205 aa).

4 consecutive 4Fe-4S ferredoxin-type domains span residues 2–31, 41–72, 73–102, and 140–172; these read NRFV…TQGL, KTST…SQRD, DAIQ…ASGS, and QTVA…LITG. [4Fe-4S] cluster-binding residues include C12, C15, C18, C22, C51, C54, C59, C63, C82, C85, C88, C92, C146, C149, C158, and C162.

The cofactor is [4Fe-4S] cluster.

Functionally, probable electron transfer protein for hydrogenase 4. This chain is Hydrogenase-4 component A, found in Escherichia coli (strain K12).